A 122-amino-acid chain; its full sequence is Large ribosomal subunit protein uL14c (122 aa).

It belongs to the universal ribosomal protein uL14 family. In terms of assembly, part of the 50S ribosomal subunit.

The protein resides in the plastid. Functionally, binds to 23S rRNA. The protein is Large ribosomal subunit protein uL14c (rpl14) of Helicosporidium sp. subsp. Simulium jonesii (Green alga).